Reading from the N-terminus, the 297-residue chain is Transcription factor PCF8 (297 aa).

The disordered stretch occupies residues 1–22; sequence MEEVVGGGKERKRPRGALVGVG. The region spanning 46 to 104 is the TCP domain; that stretch reads GKDRHSKVVTSRGLRDRRVRLSVPTAIAFYDIQDRLGVDQPSKAIEWLIRAAAAAIDAL. Disordered stretches follow at residues 116-136 and 273-297; these read AASS…SETS and AAPA…ERKT. Over residues 282 to 297 the composition is skewed to basic and acidic residues; sequence GERRLQLWDFKEERKT.

In terms of assembly, forms homodimers and heterodimers.

It is found in the nucleus. Transcription activator. Binds the promoter core sequence 5'-GGNCC-3'. The polypeptide is Transcription factor PCF8 (PCF8) (Oryza sativa subsp. indica (Rice)).